The following is a 432-amino-acid chain: Adenylosuccinate synthetase (432 aa).

Residues 13–19 (GDEGKGK) and 41–43 (GHT) each bind GTP. The active-site Proton acceptor is the aspartate 14. Mg(2+) is bound by residues aspartate 14 and glycine 41. Residues 14-17 (DEGK), 39-42 (NAGH), threonine 130, arginine 144, glutamine 225, threonine 240, and arginine 304 each bind IMP. The active-site Proton donor is the histidine 42. 300-306 (ATTGRRR) serves as a coordination point for substrate. Residues arginine 306, 332–334 (KLD), and 415–417 (STG) each bind GTP.

Belongs to the adenylosuccinate synthetase family. In terms of assembly, homodimer. Requires Mg(2+) as cofactor.

Its subcellular location is the cytoplasm. It carries out the reaction IMP + L-aspartate + GTP = N(6)-(1,2-dicarboxyethyl)-AMP + GDP + phosphate + 2 H(+). It participates in purine metabolism; AMP biosynthesis via de novo pathway; AMP from IMP: step 1/2. In terms of biological role, plays an important role in the de novo pathway of purine nucleotide biosynthesis. Catalyzes the first committed step in the biosynthesis of AMP from IMP. The chain is Adenylosuccinate synthetase from Pectobacterium carotovorum subsp. carotovorum (strain PC1).